The sequence spans 198 residues: MTAQNENAQAQAEQVEVANEAQLEQTAEVQQEQPVEAELAAAYARINELETYIAEADNREKDIQLRAQAEIQNIRRRAEQDVEKAHKFALEKFSKELLTVVDNLERGLNALDTAVTDEKTQALVDGVEMTHKEFISTLAKFGVEAVGVVGEAFNPEVHEAISMQPAEGIEANHISVVLQKGYTLQGRVLRPAMVMVAG.

This sequence belongs to the GrpE family. As to quaternary structure, homodimer.

The protein resides in the cytoplasm. Its function is as follows. Participates actively in the response to hyperosmotic and heat shock by preventing the aggregation of stress-denatured proteins, in association with DnaK and GrpE. It is the nucleotide exchange factor for DnaK and may function as a thermosensor. Unfolded proteins bind initially to DnaJ; upon interaction with the DnaJ-bound protein, DnaK hydrolyzes its bound ATP, resulting in the formation of a stable complex. GrpE releases ADP from DnaK; ATP binding to DnaK triggers the release of the substrate protein, thus completing the reaction cycle. Several rounds of ATP-dependent interactions between DnaJ, DnaK and GrpE are required for fully efficient folding. This chain is Protein GrpE, found in Actinobacillus pleuropneumoniae serotype 3 (strain JL03).